Consider the following 349-residue polypeptide: Glycosyltransferase 8 domain-containing protein 2 (349 aa).

Residues 1–6 (MAFLRK) are Cytoplasmic-facing. Residues 7–24 (VNQVLLLLLVLTLCGILY) traverse the membrane as a helical; Signal-anchor for type II membrane protein segment. At 25 to 349 (KKVHKGAVLK…AGIFKLHHNR (325 aa)) the chain is on the lumenal side. N-linked (GlcNAc...) asparagine glycosylation occurs at N234.

It belongs to the glycosyltransferase 8 family.

The protein resides in the membrane. The protein is Glycosyltransferase 8 domain-containing protein 2 (Glt8d2) of Mus musculus (Mouse).